The sequence spans 439 residues: GTPase Der (439 aa).

EngA-type G domains are found at residues 2–168 and 181–357; these read ATVL…EEKG and IKVA…ASYT. GTP is bound by residues 8–15, 55–59, 118–121, 187–194, 234–238, and 300–303; these read GKPNVGKS, DTCGV, NKTE, GRPNVGKS, DTAGL, and NKWD. The 82-residue stretch at 358–439 folds into the KH-like domain; it reads TKVPSSAINS…PIFLKFKRSR (82 aa).

It belongs to the TRAFAC class TrmE-Era-EngA-EngB-Septin-like GTPase superfamily. EngA (Der) GTPase family. In terms of assembly, associates with the 50S ribosomal subunit.

In terms of biological role, GTPase that plays an essential role in the late steps of ribosome biogenesis. The polypeptide is GTPase Der (Thermotoga petrophila (strain ATCC BAA-488 / DSM 13995 / JCM 10881 / RKU-1)).